A 353-amino-acid polypeptide reads, in one-letter code: Inactive ADP-ribosyltransferase ARH2 (353 aa).

At Ser27 the chain carries Phosphoserine.

The protein belongs to the ADP-ribosylglycohydrolase family.

The protein resides in the cytoplasm. Its subcellular location is the myofibril. It is found in the sarcomere. Functionally, required for myofibril assembly and outgrowth of the cardiac chambers in the developing heart. Appears to be catalytically inactive, showing no activity against O-acetyl-ADP-ribose. The chain is Inactive ADP-ribosyltransferase ARH2 (Adprhl1) from Rattus norvegicus (Rat).